A 341-amino-acid chain; its full sequence is Tetraacyldisaccharide 4'-kinase (341 aa).

54-61 serves as a coordination point for ATP; sequence TVGGAGKT.

It belongs to the LpxK family.

The catalysed reaction is a lipid A disaccharide + ATP = a lipid IVA + ADP + H(+). Its pathway is glycolipid biosynthesis; lipid IV(A) biosynthesis; lipid IV(A) from (3R)-3-hydroxytetradecanoyl-[acyl-carrier-protein] and UDP-N-acetyl-alpha-D-glucosamine: step 6/6. Transfers the gamma-phosphate of ATP to the 4'-position of a tetraacyldisaccharide 1-phosphate intermediate (termed DS-1-P) to form tetraacyldisaccharide 1,4'-bis-phosphate (lipid IVA). In Brucella anthropi (strain ATCC 49188 / DSM 6882 / CCUG 24695 / JCM 21032 / LMG 3331 / NBRC 15819 / NCTC 12168 / Alc 37) (Ochrobactrum anthropi), this protein is Tetraacyldisaccharide 4'-kinase.